A 423-amino-acid chain; its full sequence is Chitinase 1 (423 aa).

The first 22 residues, 1 to 22 (MLSFVKKSIALVAALQAVTALA), serve as a signal peptide directing secretion. Residues 23–34 (TPISSEAGVEKR) constitute a propeptide that is removed on maturation. The region spanning 38–401 (FANAVYFTNW…STSHQGLGSQ (364 aa)) is the GH18 domain. Residues 102–103 (GT) and 129–132 (GGWT) each bind chitin. Glutamate 171 acts as the Proton donor in catalysis. Chitin contacts are provided by residues tyrosine 172, 237-240 (MAYD), and tryptophan 378.

Belongs to the glycosyl hydrolase 18 family. Chitinase class V subfamily.

It localises to the secreted. The catalysed reaction is Random endo-hydrolysis of N-acetyl-beta-D-glucosaminide (1-&gt;4)-beta-linkages in chitin and chitodextrins.. The polypeptide is Chitinase 1 (CHI1) (Aphanocladium album (Wheat rust fungus)).